A 296-amino-acid polypeptide reads, in one-letter code: ATP synthase gamma chain (296 aa).

The protein belongs to the ATPase gamma chain family. F-type ATPases have 2 components, CF(1) - the catalytic core - and CF(0) - the membrane proton channel. CF(1) has five subunits: alpha(3), beta(3), gamma(1), delta(1), epsilon(1). CF(0) has three main subunits: a, b and c.

It is found in the cell inner membrane. In terms of biological role, produces ATP from ADP in the presence of a proton gradient across the membrane. The gamma chain is believed to be important in regulating ATPase activity and the flow of protons through the CF(0) complex. This chain is ATP synthase gamma chain, found in Gluconobacter oxydans (strain 621H) (Gluconobacter suboxydans).